A 173-amino-acid chain; its full sequence is MSIILGIDPGSRITGYGVIRQNGRHLQYLGSGCIRMSEKELPGRLKQIYAGVSEIITQFQPDVFAIEQVFMSKNADSALKLGQARGSAIVAAVNADLPVYEYAARLIKQAVTGTGGADKSQVQHMVMSMLKLPAKPQADAADALGAAICHANTNKTLIALAGKATGARRGRYR.

Catalysis depends on residues aspartate 8, glutamate 67, and aspartate 139. Mg(2+)-binding residues include aspartate 8, glutamate 67, and aspartate 139.

It belongs to the RuvC family. As to quaternary structure, homodimer which binds Holliday junction (HJ) DNA. The HJ becomes 2-fold symmetrical on binding to RuvC with unstacked arms; it has a different conformation from HJ DNA in complex with RuvA. In the full resolvosome a probable DNA-RuvA(4)-RuvB(12)-RuvC(2) complex forms which resolves the HJ. It depends on Mg(2+) as a cofactor.

Its subcellular location is the cytoplasm. The catalysed reaction is Endonucleolytic cleavage at a junction such as a reciprocal single-stranded crossover between two homologous DNA duplexes (Holliday junction).. Its function is as follows. The RuvA-RuvB-RuvC complex processes Holliday junction (HJ) DNA during genetic recombination and DNA repair. Endonuclease that resolves HJ intermediates. Cleaves cruciform DNA by making single-stranded nicks across the HJ at symmetrical positions within the homologous arms, yielding a 5'-phosphate and a 3'-hydroxyl group; requires a central core of homology in the junction. The consensus cleavage sequence is 5'-(A/T)TT(C/G)-3'. Cleavage occurs on the 3'-side of the TT dinucleotide at the point of strand exchange. HJ branch migration catalyzed by RuvA-RuvB allows RuvC to scan DNA until it finds its consensus sequence, where it cleaves and resolves the cruciform DNA. The polypeptide is Crossover junction endodeoxyribonuclease RuvC (Aliivibrio fischeri (strain ATCC 700601 / ES114) (Vibrio fischeri)).